The primary structure comprises 948 residues: Phosphoenolpyruvate carboxylase (948 aa).

Active-site residues include His138 and Lys610.

Belongs to the PEPCase type 1 family. Mg(2+) is required as a cofactor.

It carries out the reaction oxaloacetate + phosphate = phosphoenolpyruvate + hydrogencarbonate. Functionally, forms oxaloacetate, a four-carbon dicarboxylic acid source for the tricarboxylic acid cycle. This chain is Phosphoenolpyruvate carboxylase, found in Streptococcus gordonii (strain Challis / ATCC 35105 / BCRC 15272 / CH1 / DL1 / V288).